We begin with the raw amino-acid sequence, 156 residues long: Small ribosomal subunit protein uS7 (156 aa).

Belongs to the universal ribosomal protein uS7 family. As to quaternary structure, part of the 30S ribosomal subunit. Contacts proteins S9 and S11.

Functionally, one of the primary rRNA binding proteins, it binds directly to 16S rRNA where it nucleates assembly of the head domain of the 30S subunit. Is located at the subunit interface close to the decoding center, probably blocks exit of the E-site tRNA. The polypeptide is Small ribosomal subunit protein uS7 (Bacillus cereus (strain B4264)).